The following is a 277-amino-acid chain: Endochitinase CHI (277 aa).

Positions 1 to 31 (MAKPTSRNDRFALFFITLIFLILTVSKPVAS) are cleaved as a signal peptide. A Chitin-binding type-1 domain is found at 32 to 66 (QNCGCASDFCCSKYGYCGTTDEFCGEGCQAGPCRS). Intrachain disulfides connect Cys34-Cys42, Cys36-Cys48, Cys41-Cys55, and Cys59-Cys64. A catalytic region spans residues 75 to 277 (VSLEGTVTPD…GVAPGDNLTC (203 aa)). Glu136 serves as the catalytic Proton donor. Asn274 is a glycosylation site (N-linked (GlcNAc...) asparagine).

This sequence belongs to the glycosyl hydrolase 19 family. Chitinase class I subfamily.

It carries out the reaction Random endo-hydrolysis of N-acetyl-beta-D-glucosaminide (1-&gt;4)-beta-linkages in chitin and chitodextrins.. The sequence is that of Endochitinase CHI from Arabidopsis thaliana (Mouse-ear cress).